The following is a 1708-amino-acid chain: Rapamycin-insensitive companion of mTOR (1708 aa).

Residues Met-1–Gln-789 are interaction with NBN. Ser-21, Ser-35, and Ser-265 each carry phosphoserine. A Glycyl lysine isopeptide (Lys-Gly) (interchain with G-Cter in ubiquitin) cross-link involves residue Lys-274. The ribosome-binding domain stretch occupies residues Leu-521 to Leu-570. ATP contacts are provided by Asn-543, Arg-572, and Arg-576. Residues Leu-1022–Pro-1041 are disordered. N6-acetyllysine occurs at positions 1092 and 1095. Phosphothreonine is present on Thr-1103. The tract at residues Thr-1103 to Leu-1134 is disordered. Residues Lys-1116, Lys-1119, and Lys-1125 each carry the N6-acetyllysine modification. Thr-1135 bears the Phosphothreonine; by RPS6KB1 mark. Residues Ser-1138, Ser-1162, and Ser-1219 each carry the phosphoserine modification. A disordered region spans residues Val-1204–Cys-1252. Positions Glu-1206 to Asn-1221 are enriched in polar residues. Positions Thr-1222–Thr-1240 are enriched in low complexity. Position 1235 is a phosphoserine; by GSK3-beta (Ser-1235). Thr-1271 bears the Phosphothreonine mark. 4 positions are modified to phosphoserine: Ser-1274, Ser-1278, Ser-1282, and Ser-1284. A compositionally biased stretch (low complexity) spans Asn-1275–Val-1288. The disordered stretch occupies residues Asn-1275–Arg-1298. Thr-1295 bears the Phosphothreonine mark. Phosphoserine occurs at positions 1302 and 1313. Thr-1332 carries the post-translational modification Phosphothreonine. A phosphoserine mark is found at Ser-1346 and Ser-1353. Thr-1376 carries the phosphothreonine modification. Ser-1385 is modified (phosphoserine). Tyr-1386 carries the phosphotyrosine modification. 3 positions are modified to phosphoserine: Ser-1388, Ser-1396, and Ser-1411. Zn(2+) contacts are provided by His-1515, Cys-1520, and Cys-1523. Residues Ser-1571, Ser-1574, Ser-1577, and Ser-1591 each carry the phosphoserine modification. Cys-1651 serves as a coordination point for Zn(2+). A Phosphothreonine; by GSK3-alpha and GSK3-beta modification is found at Thr-1695.

It belongs to the RICTOR family. Component of the mechanistic target of rapamycin complex 2 (mTORC2), consisting in two heterotretramers composed of MTOR, MLST8, RICTOR and MAPKAP1/SIN1. The mTORC2 core complex associates with PRR5/PROTOR1 and/or PRR5L/PROTOR2. Contrary to mTORC1, mTORC2 does not bind to and is not sensitive to FKBP12-rapamycin. Binds directly to MTOR and PRR5 within the TORC2 complex; interaction with MTOR is enhanced by deubiquitination of RICTOR by USP9X. Interaction with MAPKAP1 is not enhanced by RICTOR deubiquitination by USP9X. Interacts with CCDC28B. Interacts with NBN. Interacts with SIK3. Interacts with NCKAP1L. Interacts with kinases GSK3A and GSK3B; the interactions lead to phosphorylation of RICTOR at Thr-1695 which facilitates its FBXW7-mediated ubiquitination and subsequent degradation. Interacts with FBXW7; the interaction is enhanced by GSK3-mediated phosphorylation of Thr-1695 and results in RICTOR ubiquitination and degradation. Interacts with ARMH4 (via cytoplasmic tail); this interaction bridges ARMH4 to the mTORC2 complex and inhibits the mTORC2 kinase activity. Interacts with UBXN2A. Interacts with TSPAN8. As to quaternary structure, (Microbial infection) Interacts with vaccinia virus protein F17; this interaction dysregulates MTOR. In terms of processing, phosphorylated by MTOR; when part of mTORC2. Phosphorylated at Thr-1135 by RPS6KB1 downstream of the mTORC1 complex: phosphorylation of RICTOR inhibits mTORC2 signaling by creating a binding site for 14-3-3 proteins. Phosphorylated at Thr-1695 by GSK3A and GSK3B which facilitates RICTOR ubiquitination and subsequent degradation. Phosphorylated at Ser-1235 by GSK3B in response to endoplasmic stress, inhibiting mTORC2 signaling. Ubiquitinated by the SCF(FBXW7) complex, leading to its degradation by the proteasome. Deubiquitinated by USP9X; deubiquitination stabilizes RICTOR and enhances its binding to MTOR, thus promoting mTORC2 complex assembly. Post-translationally, acetylated by EP300/p300 in response to glucose, leading to activate the mTORC2 complex. Acetylation by BLOC1S1/GCN5L1 in response to hypotoxic stress protects RICTOR against ubiquitination and subsequent degradation by the proteasome.

The protein resides in the cell membrane. It is found in the endoplasmic reticulum membrane. Its subcellular location is the lysosome membrane. Its function is as follows. Component of the mechanistic target of rapamycin complex 2 (mTORC2), which transduces signals from growth factors to pathways involved in proliferation, cytoskeletal organization, lipogenesis and anabolic output. In response to growth factors, mTORC2 phosphorylates and activates AGC protein kinase family members, including AKT (AKT1, AKT2 and AKT3), PKC (PRKCA, PRKCB and PRKCE) and SGK1. In contrast to mTORC1, mTORC2 is nutrient-insensitive. Within the mTORC2 complex, RICTOR probably acts as a molecular adapter. RICTOR is responsible for the FKBP12-rapamycin-insensitivity of mTORC2. mTORC2 plays a critical role in AKT1 activation by mediating phosphorylation of different sites depending on the context, such as 'Thr-450', 'Ser-473', 'Ser-477' or 'Thr-479', facilitating the phosphorylation of the activation loop of AKT1 on 'Thr-308' by PDPK1/PDK1 which is a prerequisite for full activation. mTORC2 catalyzes the phosphorylation of SGK1 at 'Ser-422' and of PRKCA on 'Ser-657'. The mTORC2 complex also phosphorylates various proteins involved in insulin signaling, such as FBXW8 and IGF2BP1. mTORC2 acts upstream of Rho GTPases to regulate the actin cytoskeleton, probably by activating one or more Rho-type guanine nucleotide exchange factors. mTORC2 promotes the serum-induced formation of stress-fibers or F-actin. This Homo sapiens (Human) protein is Rapamycin-insensitive companion of mTOR.